The chain runs to 93 residues: Phosphoribosyl-ATP pyrophosphatase (93 aa).

It belongs to the PRA-PH family.

Its subcellular location is the cytoplasm. It carries out the reaction 1-(5-phospho-beta-D-ribosyl)-ATP + H2O = 1-(5-phospho-beta-D-ribosyl)-5'-AMP + diphosphate + H(+). The protein operates within amino-acid biosynthesis; L-histidine biosynthesis; L-histidine from 5-phospho-alpha-D-ribose 1-diphosphate: step 2/9. In Mycolicibacterium paratuberculosis (strain ATCC BAA-968 / K-10) (Mycobacterium paratuberculosis), this protein is Phosphoribosyl-ATP pyrophosphatase.